The primary structure comprises 457 residues: Cystathionine beta-lyase, chloroplastic (457 aa).

The transit peptide at 1–51 directs the protein to the chloroplast; sequence MFSRPFVTPVTIDLQVKSITAGNMWEGLGFYKPANSKSNQMICSKGFRLNC. Y120, R122, G150, M151, S268, and T270 together coordinate pyridoxal 5'-phosphate. K271 bears the N6-(pyridoxal phosphate)lysine mark.

It belongs to the trans-sulfuration enzymes family. Forms homodimers. May form homotetramers from two homodimers. It depends on pyridoxal 5'-phosphate as a cofactor.

The protein localises to the plastid. Its subcellular location is the chloroplast. It catalyses the reaction L,L-cystathionine + H2O = L-homocysteine + pyruvate + NH4(+). It carries out the reaction an S-substituted L-cysteine + H2O = a thiol + pyruvate + NH4(+). Its function is as follows. Catalyzes the degradation of cystathionine. In Mimosa pudica (Sensitive plant), this protein is Cystathionine beta-lyase, chloroplastic.